Consider the following 2242-residue polypeptide: DEP domain-containing protein DDB_G0279099 (2242 aa).

Disordered stretches follow at residues 388–465, 576–644, 701–730, 871–965, 1077–1194, 1287–1336, 1384–1414, 1446–1471, and 1502–1521; these read SQNT…SNNS, DSNA…YSRV, PILRNGGTINNNNNNQQNHPISPSNSFDQK, DPTT…TKKS, QLQL…AFNS, GSQQ…MNGS, SELLPSSSGASSSSSNTLSSSNSGENNALPE, AQSSLLNSSTNNANSNNSSNSTNTSG, and SNNNTYTNNNNNNNSINSLN. Residues 392–440 are a coiled coil; that stretch reads IQNNNNNNNNNNNNNNNNNNNNNNNNNNNNNNNNNNNNNSNNNKNNQNN. Residues 581–614 are compositionally biased toward low complexity; that stretch reads GGNNNNNYNNNNGNGNGHNHNNHNNNNNNNNNND. Acidic residues predominate over residues 622 to 631; sequence EPSDFSDTED. 2 stretches are compositionally biased toward polar residues: residues 632–642 and 719–729; these read NSSTTPNSQYS and HPISPSNSFDQ. Residues 872–955 are compositionally biased toward low complexity; the sequence is PTTTTTTGGT…PNSSNTVPNS (84 aa). Residues 1066–1101 adopt a coiled-coil conformation; it reads IPTVENNQHQQQLQLEQQEKEKEKARLAALEKKKPF. Residues 1082–1106 are compositionally biased toward basic and acidic residues; it reads QQEKEKEKARLAALEKKKPFPREDS. 2 stretches are compositionally biased toward low complexity: residues 1108-1182 and 1287-1299; these read STLI…ATTA and GSQQQQQLIGSQS. Over residues 1300–1311 the composition is skewed to polar residues; the sequence is APTSPLTPHKNI. 3 stretches are compositionally biased toward low complexity: residues 1312–1336, 1384–1410, and 1446–1470; these read NTNNNNNNNTTTNTTNNNNSVMNGS, SELLPSSSGASSSSSNTLSSSNSGENN, and AQSSLLNSSTNNANSNNSSNSTNTS. The DEP domain occupies 1556 to 1629; the sequence is IGIKMTERKY…DGQFYYRLKE (74 aa). Residues 1645–1668 show a composition bias toward low complexity; it reads TNNNFNNNNTNSNNNQQQQQQQQS. 4 disordered regions span residues 1645 to 1763, 1803 to 1910, 2122 to 2145, and 2165 to 2218; these read TNNN…SMSN, DEAN…QQQQ, NYNNNNNNNNNNNGGGNGNPNLLK, and NSDT…KNEM. A compositionally biased stretch (polar residues) spans 1669–1702; the sequence is IPSVTSSAVNSPNKDSNTPDHSPISSPKQIGNKL. Composition is skewed to low complexity over residues 1703-1760 and 1807-1848; these read SSSS…IQSS and GDNN…SSNS. Residues 1791 to 1821 adopt a coiled-coil conformation; sequence LTNKEKDKEKEIDEANGDNNNNNNNNNNNNN. Polar residues-rich tracts occupy residues 1849 to 1871 and 1879 to 1889; these read GQGSLNSTLSSIPPATTPNTNPL and YGSSVQNSNQH. 2 stretches are compositionally biased toward low complexity: residues 1890 to 1910 and 2122 to 2133; these read QQQQPQQPQQQQQQQQQQQQQ and NYNNNNNNNNNN. Composition is skewed to basic and acidic residues over residues 2166–2181 and 2192–2218; these read SDTEEKNNESDSDNNH and DTDHLSESHEGSHKNESDKEGRDKNEM.

The protein in the N-terminal section; belongs to the IML1 family.

This is DEP domain-containing protein DDB_G0279099 from Dictyostelium discoideum (Social amoeba).